An 873-amino-acid chain; its full sequence is Putative receptor-like protein kinase At5g39000 (873 aa).

The N-terminal stretch at 1-21 (MIRHALLIFSILVSTPIVGEG) is a signal peptide. Topologically, residues 22-445 (ATSTYEPTDV…KNKSHILPIT (424 aa)) are extracellular. 9 N-linked (GlcNAc...) asparagine glycosylation sites follow: asparagine 49, asparagine 64, asparagine 138, asparagine 168, asparagine 216, asparagine 266, asparagine 300, asparagine 340, and asparagine 437. Residues 446-466 (LAVVGSLVVLAMFVVGVLVIM) form a helical membrane-spanning segment. Topologically, residues 467–873 (KKKKKSKPST…FSEINEPKAR (407 aa)) are cytoplasmic. Residues 472–494 (SKPSTNSSWCPLPHGTDSTNTKP) are disordered. The Protein kinase domain maps to 518–803 (FEDKLIIGVG…EFALQLHETA (286 aa)). ATP-binding positions include 524–532 (IGVGGFGSV) and lysine 547. The active-site Proton acceptor is aspartate 646. Residues 813–843 (LDLMPSGEVGTTTDGEDDLFSRTTGHVGKST) form a disordered region. The span at 833–843 (SRTTGHVGKST) shows a compositional bias: polar residues.

The protein belongs to the protein kinase superfamily. Ser/Thr protein kinase family.

The protein localises to the membrane. This chain is Putative receptor-like protein kinase At5g39000, found in Arabidopsis thaliana (Mouse-ear cress).